Here is a 200-residue protein sequence, read N- to C-terminus: 3-isopropylmalate dehydratase small subunit (200 aa).

Belongs to the LeuD family. LeuD type 1 subfamily. Heterodimer of LeuC and LeuD.

The catalysed reaction is (2R,3S)-3-isopropylmalate = (2S)-2-isopropylmalate. The protein operates within amino-acid biosynthesis; L-leucine biosynthesis; L-leucine from 3-methyl-2-oxobutanoate: step 2/4. In terms of biological role, catalyzes the isomerization between 2-isopropylmalate and 3-isopropylmalate, via the formation of 2-isopropylmaleate. The protein is 3-isopropylmalate dehydratase small subunit of Aliivibrio salmonicida (strain LFI1238) (Vibrio salmonicida (strain LFI1238)).